The sequence spans 60 residues: UPF0434 protein YcaR (60 aa).

Belongs to the UPF0434 family.

The chain is UPF0434 protein YcaR from Salmonella arizonae (strain ATCC BAA-731 / CDC346-86 / RSK2980).